Reading from the N-terminus, the 124-residue chain is FK506-binding protein 1 (124 aa).

One can recognise a PPIase FKBP-type domain in the interval 23–122 (GDTVTIHYDG…VFEVELLGVN (100 aa)).

The protein belongs to the FKBP-type PPIase family. FKBP1 subfamily.

It is found in the cytoplasm. It carries out the reaction [protein]-peptidylproline (omega=180) = [protein]-peptidylproline (omega=0). Its activity is regulated as follows. Inhibited by rapamycin. PPIases accelerate the folding of proteins. It catalyzes the cis-trans isomerization of proline imidic peptide bonds in oligopeptides. This Candida albicans (strain SC5314 / ATCC MYA-2876) (Yeast) protein is FK506-binding protein 1 (RBP1).